A 157-amino-acid chain; its full sequence is Endoribonuclease YbeY (157 aa).

Zn(2+) contacts are provided by histidine 114, histidine 118, and histidine 124.

This sequence belongs to the endoribonuclease YbeY family. Zn(2+) is required as a cofactor.

Its subcellular location is the cytoplasm. Single strand-specific metallo-endoribonuclease involved in late-stage 70S ribosome quality control and in maturation of the 3' terminus of the 16S rRNA. The polypeptide is Endoribonuclease YbeY (Salmonella dublin (strain CT_02021853)).